The sequence spans 438 residues: Thymidine phosphorylase (438 aa).

The protein belongs to the thymidine/pyrimidine-nucleoside phosphorylase family. Homodimer.

It carries out the reaction thymidine + phosphate = 2-deoxy-alpha-D-ribose 1-phosphate + thymine. Its pathway is pyrimidine metabolism; dTMP biosynthesis via salvage pathway; dTMP from thymine: step 1/2. The enzymes which catalyze the reversible phosphorolysis of pyrimidine nucleosides are involved in the degradation of these compounds and in their utilization as carbon and energy sources, or in the rescue of pyrimidine bases for nucleotide synthesis. This chain is Thymidine phosphorylase, found in Burkholderia lata (strain ATCC 17760 / DSM 23089 / LMG 22485 / NCIMB 9086 / R18194 / 383).